Here is a 375-residue protein sequence, read N- to C-terminus: Coproporphyrin III ferrochelatase (375 aa).

Serine 59 and tyrosine 128 together coordinate Fe-coproporphyrin III. Positions 191 and 286 each coordinate Fe(2+).

This sequence belongs to the ferrochelatase family.

Its subcellular location is the cytoplasm. The enzyme catalyses Fe-coproporphyrin III + 2 H(+) = coproporphyrin III + Fe(2+). The protein operates within porphyrin-containing compound metabolism; protoheme biosynthesis. In terms of biological role, involved in coproporphyrin-dependent heme b biosynthesis. Catalyzes the insertion of ferrous iron into coproporphyrin III to form Fe-coproporphyrin III. This chain is Coproporphyrin III ferrochelatase, found in Streptomyces griseus subsp. griseus (strain JCM 4626 / CBS 651.72 / NBRC 13350 / KCC S-0626 / ISP 5235).